Here is a 148-residue protein sequence, read N- to C-terminus: Lysozyme-like protein 6 (148 aa).

A signal peptide spans Met1–Ala19. The region spanning Ser20 to Arg148 is the C-type lysozyme domain. Disulfide bonds link Cys25–Cys145, Cys49–Cys133, Cys83–Cys98, and Cys94–Cys112. Active-site residues include Glu54 and Asp71.

Belongs to the glycosyl hydrolase 22 family. In terms of assembly, monomer. As to expression, expressed in testis, epididymis and spermatozoa (at protein level). Expressed in late-stage spermatocytes and round spermatids.

The protein resides in the secreted. It is found in the cell surface. The protein localises to the cell projection. It localises to the cilium. Its subcellular location is the flagellum. The catalysed reaction is Hydrolysis of (1-&gt;4)-beta-linkages between N-acetylmuramic acid and N-acetyl-D-glucosamine residues in a peptidoglycan and between N-acetyl-D-glucosamine residues in chitodextrins.. Functionally, may be involved sperm-egg plasma membrane adhesion and fusion during fertilization. Exhibits bacteriolytic activity in vitro against Micrococcus luteus and Staphylococcus aureus. Shows weak bacteriolytic activity against Gram-positive bacteria at physiological pH. Bacteriolytic activity is pH-dependent, with a maximum at around pH 5.6. The sequence is that of Lysozyme-like protein 6 (LYZL6) from Homo sapiens (Human).